The following is a 329-amino-acid chain: DNA-directed RNA polymerase subunit alpha (329 aa).

The tract at residues 1–235 is alpha N-terminal domain (alpha-NTD); that stretch reads MQGSVTEFLK…EQLEAFVDLR (235 aa). The segment at 249-329 is alpha C-terminal domain (alpha-CTD); that stretch reads FDPILLRPVD…NWPPASIADE (81 aa).

The protein belongs to the RNA polymerase alpha chain family. In terms of assembly, homodimer. The RNAP catalytic core consists of 2 alpha, 1 beta, 1 beta' and 1 omega subunit. When a sigma factor is associated with the core the holoenzyme is formed, which can initiate transcription.

The catalysed reaction is RNA(n) + a ribonucleoside 5'-triphosphate = RNA(n+1) + diphosphate. Functionally, DNA-dependent RNA polymerase catalyzes the transcription of DNA into RNA using the four ribonucleoside triphosphates as substrates. The sequence is that of DNA-directed RNA polymerase subunit alpha from Enterobacter sp. (strain 638).